Here is a 438-residue protein sequence, read N- to C-terminus: Adenosylhomocysteinase (438 aa).

Substrate contacts are provided by T64, D139, and E164. NAD(+) is bound at residue 165–167; the sequence is TTT. Substrate is bound by residues K194 and D198. NAD(+) is bound by residues N199, 228–233, E251, N286, 307–309, and N352; these read GYGDVG and IGH.

This sequence belongs to the adenosylhomocysteinase family. NAD(+) is required as a cofactor.

It is found in the cytoplasm. It carries out the reaction S-adenosyl-L-homocysteine + H2O = L-homocysteine + adenosine. It participates in amino-acid biosynthesis; L-homocysteine biosynthesis; L-homocysteine from S-adenosyl-L-homocysteine: step 1/1. May play a key role in the regulation of the intracellular concentration of adenosylhomocysteine. The sequence is that of Adenosylhomocysteinase from Coxiella burnetii (strain CbuK_Q154) (Coxiella burnetii (strain Q154)).